A 300-amino-acid polypeptide reads, in one-letter code: Cation-efflux pump FieF (300 aa).

Residues 24–44 form a helical membrane-spanning segment; sequence LLIKIFAWWYTGSVSILAALV. Zn(2+) is bound by residues Asp45 and Asp49. 2 helical membrane-spanning segments follow: residues 82–102 and 114–134; these read AALA…LTSI and PGVG…LVTF. Zn(2+) is bound by residues His153 and Asp157. 2 helical membrane-spanning segments follow: residues 156-176 and 178-198; these read SDVM…YGWH and ADAL…LRMG.

Belongs to the cation diffusion facilitator (CDF) transporter (TC 2.A.4) family. FieF subfamily. Homodimer.

Its subcellular location is the cell inner membrane. It catalyses the reaction Zn(2+)(in) + H(+)(out) = Zn(2+)(out) + H(+)(in). It carries out the reaction Cd(2+)(in) + H(+)(out) = Cd(2+)(out) + H(+)(in). The enzyme catalyses Fe(2+)(in) + H(+)(out) = Fe(2+)(out) + H(+)(in). Divalent metal cation transporter which exports Zn(2+), Cd(2+) and possibly Fe(2+). May be involved in zinc and iron detoxification by efflux. In Salmonella schwarzengrund (strain CVM19633), this protein is Cation-efflux pump FieF.